Consider the following 844-residue polypeptide: RNA-directed RNA polymerase (844 aa).

248-255 (GLPYIGKT) serves as a coordination point for GTP. One can recognise a RdRp catalytic domain in the interval 384–588 (MIYADNIYIL…ENERLIASVA (205 aa)). The disordered stretch occupies residues 820–844 (EFSEKIPLTPTQKKNAKRREKQRRN). Over residues 833 to 844 (KNAKRREKQRRN) the composition is skewed to basic residues.

As to quaternary structure, interacts with VP3 in the cytoplasm. Post-translationally, exists in multiple phosphorylated forms.

Its subcellular location is the virion. The catalysed reaction is RNA(n) + a ribonucleoside 5'-triphosphate = RNA(n+1) + diphosphate. Functionally, RNA-dependent RNA polymerase which is found both free and covalently attached to the genomic RNA. May also contain guanylyl and methyl transferase activities. This is RNA-directed RNA polymerase (VP1) from Infectious pancreatic necrosis virus (strain Sp) (IPNV).